Reading from the N-terminus, the 593-residue chain is UvrABC system protein C (593 aa).

Residues 13-91 (TTPGVYMMKD…IKEYRPKYNV (79 aa)) enclose the GIY-YIG domain. Residues 202–237 (DEIVEELKKKMFEYADNLMFEKAQEIKNKITSLEQI) enclose the UVR domain.

The protein belongs to the UvrC family. Interacts with UvrB in an incision complex.

The protein resides in the cytoplasm. Its function is as follows. The UvrABC repair system catalyzes the recognition and processing of DNA lesions. UvrC both incises the 5' and 3' sides of the lesion. The N-terminal half is responsible for the 3' incision and the C-terminal half is responsible for the 5' incision. This is UvrABC system protein C from Caldicellulosiruptor saccharolyticus (strain ATCC 43494 / DSM 8903 / Tp8T 6331).